The primary structure comprises 907 residues: Cytochrome b561, DM13 and DOMON domain-containing protein At5g54830 (907 aa).

The first 24 residues, 1-24 (MCDQRPNLLGSLVLLGFFIFFVNG), serve as a signal peptide directing secretion. The 109-residue stretch at 31-139 (SSLIGHESEF…ASDFGHVLLS (109 aa)) folds into the DM13 domain. Positions 144–172 (SDTSKAESPPSESNDVAPGKSNNSEPFKA) are disordered. The segment covering 153–168 (PSESNDVAPGKSNNSE) has biased composition (polar residues). 2 DOMON domains span residues 184-329 (DKYR…WALG) and 524-645 (QQVK…WAMG). The Cytochrome b561 domain maps to 653 to 850 (LTERNMHSVT…CVVTVAYLEY (198 aa)). Residues 685 to 705 (VLGVHGFMMFLAWGILLPGGI) form a helical membrane-spanning segment. Residues His689 and His723 each coordinate heme b. Helical transmembrane passes span 730–750 (GLAI…GFSF), 754–774 (HVKF…NAWL), 795–815 (SHSI…FTGM), and 829–849 (GLNL…AYLE). Residues His754 and His796 each coordinate heme b. Residues 884–897 (GGFRDKDDEDRNGG) show a composition bias toward basic and acidic residues. The interval 884 to 907 (GGFRDKDDEDRNGGRMEIQLEPLK) is disordered.

Requires heme b as cofactor.

The protein resides in the membrane. Functionally, may act as a catecholamine-responsive trans-membrane electron transporter. This chain is Cytochrome b561, DM13 and DOMON domain-containing protein At5g54830, found in Arabidopsis thaliana (Mouse-ear cress).